Here is a 275-residue protein sequence, read N- to C-terminus: 2,3,4,5-tetrahydropyridine-2,6-dicarboxylate N-succinyltransferase (275 aa).

Positions 107 and 144 each coordinate substrate.

This sequence belongs to the transferase hexapeptide repeat family. Homotrimer.

Its subcellular location is the cytoplasm. The catalysed reaction is (S)-2,3,4,5-tetrahydrodipicolinate + succinyl-CoA + H2O = (S)-2-succinylamino-6-oxoheptanedioate + CoA. It functions in the pathway amino-acid biosynthesis; L-lysine biosynthesis via DAP pathway; LL-2,6-diaminopimelate from (S)-tetrahydrodipicolinate (succinylase route): step 1/3. The chain is 2,3,4,5-tetrahydropyridine-2,6-dicarboxylate N-succinyltransferase from Polynucleobacter asymbioticus (strain DSM 18221 / CIP 109841 / QLW-P1DMWA-1) (Polynucleobacter necessarius subsp. asymbioticus).